A 321-amino-acid chain; its full sequence is Tetraacyldisaccharide 4'-kinase (321 aa).

Position 54–61 (54–61) interacts with ATP; it reads SVGGTGKT.

This sequence belongs to the LpxK family.

It catalyses the reaction a lipid A disaccharide + ATP = a lipid IVA + ADP + H(+). Its pathway is glycolipid biosynthesis; lipid IV(A) biosynthesis; lipid IV(A) from (3R)-3-hydroxytetradecanoyl-[acyl-carrier-protein] and UDP-N-acetyl-alpha-D-glucosamine: step 6/6. Its function is as follows. Transfers the gamma-phosphate of ATP to the 4'-position of a tetraacyldisaccharide 1-phosphate intermediate (termed DS-1-P) to form tetraacyldisaccharide 1,4'-bis-phosphate (lipid IVA). This Rickettsia rickettsii protein is Tetraacyldisaccharide 4'-kinase.